The primary structure comprises 96 residues: UPF0235 protein Sputw3181_1321 (96 aa).

It belongs to the UPF0235 family.

This chain is UPF0235 protein Sputw3181_1321, found in Shewanella sp. (strain W3-18-1).